Reading from the N-terminus, the 124-residue chain is Glycine cleavage system H protein (124 aa).

The Lipoyl-binding domain occupies 22–104 (VATVGITEFA…YGAGWLFRVE (83 aa)). At K63 the chain carries N6-lipoyllysine.

Belongs to the GcvH family. In terms of assembly, the glycine cleavage system is composed of four proteins: P, T, L and H. (R)-lipoate serves as cofactor.

The glycine cleavage system catalyzes the degradation of glycine. The H protein shuttles the methylamine group of glycine from the P protein to the T protein. The protein is Glycine cleavage system H protein of Beutenbergia cavernae (strain ATCC BAA-8 / DSM 12333 / CCUG 43141 / JCM 11478 / NBRC 16432 / NCIMB 13614 / HKI 0122).